A 254-amino-acid polypeptide reads, in one-letter code: Pectate lyase E (254 aa).

Residues 1 to 17 (MYQPLLLLPLLLTSAFA) form the signal peptide. The tract at residues 227–254 (TNNNSKEPKKKSSGPSSYCKYSEPLSKC) is disordered. An N-linked (GlcNAc...) asparagine glycan is attached at asparagine 229. Residues 239–254 (SGPSSYCKYSEPLSKC) show a composition bias toward low complexity.

The protein belongs to the polysaccharide lyase 3 family. It depends on Ca(2+) as a cofactor.

Its subcellular location is the secreted. The enzyme catalyses Eliminative cleavage of (1-&gt;4)-alpha-D-galacturonan to give oligosaccharides with 4-deoxy-alpha-D-galact-4-enuronosyl groups at their non-reducing ends.. Functionally, pectinolytic enzyme consist of four classes of enzymes: pectin lyase, polygalacturonase, pectin methylesterase and rhamnogalacturonase. Among pectinolytic enzymes, pectin lyase is the most important in depolymerization of pectin, since it cleaves internal glycosidic bonds of highly methylated pectins. Favors pectate, the anion, over pectin, the methyl ester. In Emericella nidulans (strain FGSC A4 / ATCC 38163 / CBS 112.46 / NRRL 194 / M139) (Aspergillus nidulans), this protein is Pectate lyase E (plyE).